The chain runs to 242 residues: Type III pantothenate kinase (242 aa).

7-14 (DLGNSRFK) is a binding site for ATP. Substrate contacts are provided by residues tyrosine 91 and 98–101 (GVDR). Aspartate 100 (proton acceptor) is an active-site residue. ATP is bound at residue threonine 121. Threonine 171 provides a ligand contact to substrate.

This sequence belongs to the type III pantothenate kinase family. As to quaternary structure, homodimer. It depends on NH4(+) as a cofactor. K(+) is required as a cofactor.

Its subcellular location is the cytoplasm. It carries out the reaction (R)-pantothenate + ATP = (R)-4'-phosphopantothenate + ADP + H(+). It participates in cofactor biosynthesis; coenzyme A biosynthesis; CoA from (R)-pantothenate: step 1/5. In terms of biological role, catalyzes the phosphorylation of pantothenate (Pan), the first step in CoA biosynthesis. This is Type III pantothenate kinase from Xanthomonas oryzae pv. oryzae (strain MAFF 311018).